The following is a 573-amino-acid chain: MKVLVTSAWPYVNSVPHLGNLIGSILSADVFARYARLKYGKENVLFVSGSDEHGTPIEIEAIKRKVNPKELTDQAHEYDKHLFLNVWKISFDNYTRTESETHKKFVREFLLKLTKYVKVSEDEIPFCEYDKLYLPDRFVKGTCPYCGFEDARGDQCDNCGKLLTPSLLVNPKCSICGKAPIFKKSKHWFFDLSEFNEKIRSWISSSNEMPDNVKSVALGWVSEGLKPRSITRDNKWGIPAPFIGAEDKSIYVWFEALLGYISAVIEYFEKKGEVEKWKEYWFSNDIKSYYFIGKDNIPFHVVILPAMLMASGEEYHLPDVIAATEYLLYEGQKFSKSRKIGVWIDEAPELMDVEYWRFVLIRLRPEEKDTNFTWRETVRIVNTELNDDIGNYVNRILSMLNRYYNGIVPEFRSDALDDNDKKTISLINEIPKIVGDLFEKGKLKAGTEEMLRFVRECNAYLNLKAPWDLYKAGKEVELNNTLYIGVNSVKTIAILLYPLMPSHAQEIYDMLNMGNIENEKWDIASKLSINYGHKIGKVKVLFKKLEPEFESKIKDKLEKIRKDIEKMRPTLLK.

The 'HIGH' region motif lies at 10–20 (PYVNSVPHLGN). Zn(2+) contacts are provided by cysteine 143, cysteine 146, cysteine 156, and cysteine 159. Residues 333 to 337 (KFSKS) carry the 'KMSKS' region motif. Lysine 336 is an ATP binding site.

This sequence belongs to the class-I aminoacyl-tRNA synthetase family. MetG type 1 subfamily. Zn(2+) is required as a cofactor.

It localises to the cytoplasm. It carries out the reaction tRNA(Met) + L-methionine + ATP = L-methionyl-tRNA(Met) + AMP + diphosphate. Is required not only for elongation of protein synthesis but also for the initiation of all mRNA translation through initiator tRNA(fMet) aminoacylation. In Saccharolobus islandicus (strain M.14.25 / Kamchatka #1) (Sulfolobus islandicus), this protein is Methionine--tRNA ligase.